Here is a 119-residue protein sequence, read N- to C-terminus: MITVLTAGFGAIWGAILRYGITNYGKKHWSEKFPYATLLINLTGAFLLGFIFSRKFSPFIYALIGTGVLGGYTTFSTLNVELLSHWRDRNYSVFTLYALLSYGGGLILVFLGYKVGTLI.

The next 4 membrane-spanning stretches (helical) occupy residues 1–21, 33–53, 56–76, and 93–113; these read MITVLTAGFGAIWGAILRYGI, FPYATLLINLTGAFLLGFIFS, FSPFIYALIGTGVLGGYTTFS, and VFTLYALLSYGGGLILVFLGY. Residues G70 and T73 each contribute to the Na(+) site.

Belongs to the fluoride channel Fluc/FEX (TC 1.A.43) family.

It is found in the cell membrane. It carries out the reaction fluoride(in) = fluoride(out). With respect to regulation, na(+) is not transported, but it plays an essential structural role and its presence is essential for fluoride channel function. Its function is as follows. Fluoride-specific ion channel. Important for reducing fluoride concentration in the cell, thus reducing its toxicity. This is Fluoride-specific ion channel FluC 2 from Lactobacillus johnsonii (strain CNCM I-12250 / La1 / NCC 533).